The sequence spans 202 residues: Small ribosomal subunit protein uS4 (202 aa).

The 67-residue stretch at Cys91–His157 folds into the S4 RNA-binding domain.

It belongs to the universal ribosomal protein uS4 family. As to quaternary structure, part of the 30S ribosomal subunit. Contacts protein S5. The interaction surface between S4 and S5 is involved in control of translational fidelity.

In terms of biological role, one of the primary rRNA binding proteins, it binds directly to 16S rRNA where it nucleates assembly of the body of the 30S subunit. Functionally, with S5 and S12 plays an important role in translational accuracy. The polypeptide is Small ribosomal subunit protein uS4 (Nocardioides sp. (strain ATCC BAA-499 / JS614)).